The following is a 371-amino-acid chain: Alanine dehydrogenase (371 aa).

Substrate-binding residues include arginine 15 and lysine 75. Histidine 96 functions as the Proton donor/acceptor in the catalytic mechanism. NAD(+) contacts are provided by residues serine 134, 178 to 179, aspartate 198, lysine 203, serine 220, 239 to 240, 267 to 270, arginine 279, and 298 to 301; these read TA, VL, IAID, and VANM. The active-site Proton donor/acceptor is aspartate 270. Residues glutamate 323 and histidine 327 each coordinate Mg(2+).

It belongs to the AlaDH/PNT family. In terms of assembly, homohexamer. Trimer of dimers. Mg(2+) serves as cofactor.

The protein localises to the secreted. The catalysed reaction is L-alanine + NAD(+) + H2O = pyruvate + NH4(+) + NADH + H(+). Its pathway is amino-acid degradation; L-alanine degradation via dehydrogenase pathway; NH(3) and pyruvate from L-alanine: step 1/1. With respect to regulation, inhibited by CuSO(4) and ZnCl(2). Its function is as follows. Catalyzes the reversible reductive amination of pyruvate to L-alanine. However, since the physiological environment of M.tuberculosis has a neutral pH, it can be assumed that the enzyme catalyzes exclusively the formation of L-alanine. May play a role in cell wall synthesis as L-alanine is an important constituent of the peptidoglycan layer. The protein is Alanine dehydrogenase (ald) of Mycobacterium tuberculosis (strain ATCC 25618 / H37Rv).